Reading from the N-terminus, the 185-residue chain is Elongation factor P (185 aa).

Belongs to the elongation factor P family.

It localises to the cytoplasm. The protein operates within protein biosynthesis; polypeptide chain elongation. In terms of biological role, involved in peptide bond synthesis. Stimulates efficient translation and peptide-bond synthesis on native or reconstituted 70S ribosomes in vitro. Probably functions indirectly by altering the affinity of the ribosome for aminoacyl-tRNA, thus increasing their reactivity as acceptors for peptidyl transferase. This Burkholderia lata (strain ATCC 17760 / DSM 23089 / LMG 22485 / NCIMB 9086 / R18194 / 383) protein is Elongation factor P.